Consider the following 201-residue polypeptide: Small ribosomal subunit protein uS4 (201 aa).

Positions 19 to 41 (LVGGSSAYEKRPYPPGQHGRARI) are disordered. An S4 RNA-binding domain is found at 91–157 (SRLDNVVYRA…LPFEVARETA (67 aa)).

This sequence belongs to the universal ribosomal protein uS4 family. As to quaternary structure, part of the 30S ribosomal subunit. Contacts protein S5. The interaction surface between S4 and S5 is involved in control of translational fidelity.

Its function is as follows. One of the primary rRNA binding proteins, it binds directly to 16S rRNA where it nucleates assembly of the body of the 30S subunit. With S5 and S12 plays an important role in translational accuracy. The sequence is that of Small ribosomal subunit protein uS4 from Mycobacteroides abscessus (strain ATCC 19977 / DSM 44196 / CCUG 20993 / CIP 104536 / JCM 13569 / NCTC 13031 / TMC 1543 / L948) (Mycobacterium abscessus).